A 212-amino-acid chain; its full sequence is Uridine kinase (212 aa).

13–20 (GASASGKS) is a binding site for ATP.

It belongs to the uridine kinase family.

The protein resides in the cytoplasm. It catalyses the reaction uridine + ATP = UMP + ADP + H(+). The enzyme catalyses cytidine + ATP = CMP + ADP + H(+). Its pathway is pyrimidine metabolism; CTP biosynthesis via salvage pathway; CTP from cytidine: step 1/3. The protein operates within pyrimidine metabolism; UMP biosynthesis via salvage pathway; UMP from uridine: step 1/1. The polypeptide is Uridine kinase (Shewanella baltica (strain OS223)).